The primary structure comprises 345 residues: High mobility group protein 20A (345 aa).

Disordered regions lie at residues 1–124 (MENT…TERP) and 167–198 (QYQNTDAYQTYSRKAQSRQKGRQQRQEGVRGV). Polar residues-rich tracts occupy residues 32 to 48 (LSGSSQAPFHPQSPTLQ) and 57 to 67 (LQQSGEQQLGN). The segment covering 80 to 94 (TRRGGWTKGRKRKRS) has biased composition (basic residues). A DNA-binding region (HMG box) is located at residues 101–169 (PKAPLTGYVR…RYTKELQQYQ (69 aa)). The segment covering 112 to 124 (MNERREQLRTERP) has biased composition (basic and acidic residues). Residues 167-180 (QYQNTDAYQTYSRK) are compositionally biased toward polar residues. Residues 227-290 (SKAREAELRQ…QHLQSVRQAL (64 aa)) adopt a coiled-coil conformation.

The protein localises to the nucleus. Functionally, plays a role in neuronal differentiation. This chain is High mobility group protein 20A (hmg20a), found in Xenopus tropicalis (Western clawed frog).